The following is a 210-amino-acid chain: MTNLNYQQTHFVMSAPDIRHLPSDTGIEVAFAGRSNAGKSSALNTLTNQKSLARTSKTPGRTQLINLFEVADGKRLVDLPGYGYAEVPEEMKRKWQRALGEYLEKRQSLQGLVVLMDIRHPLKDLDQQMIEWAVDSNIAVLVLLTKADKLASGARKAQLNMVREAVLAFNGDVQVETFSSLKKQGVDKLRQKLDTWFNEMQPVEETQDGE.

The EngB-type G domain maps to 25-199 (TGIEVAFAGR…RQKLDTWFNE (175 aa)). Residues 33-40 (GRSNAGKS), 60-64 (GRTQL), 78-81 (DLPG), 145-148 (TKAD), and 178-180 (FSS) contribute to the GTP site. Residues S40 and T62 each coordinate Mg(2+).

The protein belongs to the TRAFAC class TrmE-Era-EngA-EngB-Septin-like GTPase superfamily. EngB GTPase family. Requires Mg(2+) as cofactor.

In terms of biological role, necessary for normal cell division and for the maintenance of normal septation. This is Probable GTP-binding protein EngB from Escherichia coli O157:H7.